The primary structure comprises 331 residues: UDP-glucose 4-epimerase (331 aa).

Residues 11–12, 31–36, 51–52, 73–77, Asn-92, Thr-117, Tyr-141, Lys-145, and Phe-169 contribute to the NAD(+) site; these read YI, DNLITG, DI, and FAAFS. The substrate site is built by Thr-117 and Tyr-141. The active-site Proton acceptor is the Tyr-141. Residues Asn-170, 189–190, 206–208, Arg-221, and 282–285 each bind substrate; these read HI, QIY, and RAGD.

It belongs to the NAD(P)-dependent epimerase/dehydratase family. As to quaternary structure, homodimer. The cofactor is NAD(+).

It carries out the reaction UDP-alpha-D-glucose = UDP-alpha-D-galactose. Its pathway is carbohydrate metabolism; galactose metabolism. The sequence is that of UDP-glucose 4-epimerase (galE) from Lacticaseibacillus casei (Lactobacillus casei).